The primary structure comprises 332 residues: FAD-dependent monooxygenase elcE (332 aa).

It belongs to the oxygen-dependent FAD-linked oxidoreductase family.

The protein operates within secondary metabolite biosynthesis. In terms of biological role, FAD-dependent monooxygenase; part of the gene cluster that mediates the biosynthesis of elsinochrome C, a perelyenequinone phytotoxin structurally similar to cercosporin. The first step of elsinochrome C biosynthesis is performed by the polyketide synthase elcA which catalyzes the formation of nor-toralactone. The starter unit acyltransferase (SAT) domain of elcA initiates polyketide extension by the selective utilization of acetyl-CoA, which is elongated to the heptaketide in the beta-ketoacyl synthase (KS) domain by successive condensations with six malonyl units introduced by the malonyl acyltransferase (MAT) domain. The product template (PT) domain catalyzes C4-C9 and C2-C11 aldol cyclizations and dehydrations to a trihydroxynaphthalene, which is thought to be delivered to the thioesterase (TE) domain for product release. The bifunctional enzyme elcB then methylates nor-toralactone to toralactone before conducting an unusual oxidative aromatic ring opening. The next step in perylenequinone biosynthesis is an O-methylation at the nascent OH-6 of the elcB product performed by the O-methyltransferase elcD. The oxidative coupling of the two monomeric naphthol units in perylenequinone biosynthesis is catalyzed by the FAD-dependent monooxygenase elcE and the multicopper oxidase elcG. ElcG might catalyze the first intermolecular coupling in a regio- and stereo-selective manner via a phenol radical coupling mechanism and the elcE could forge the second C-C bond intramolecularly via a hydride transfer mechanism. The fasciclin domain-containing protein elcF might also play a role duting this step. The last piece of the puzzle in the biosynthesis of elsinochrome C is the additional annulation by enolate coupling to afford the dihydrobenzo(ghi)perylenequinone system, catalyzed by the FAD-dependent monooxygenase elcH. The chain is FAD-dependent monooxygenase elcE from Phaeosphaeria nodorum (strain SN15 / ATCC MYA-4574 / FGSC 10173) (Glume blotch fungus).